We begin with the raw amino-acid sequence, 271 residues long: Glutamate racemase (271 aa).

Substrate-binding positions include 12–13 (DS) and 44–45 (YG). Cysteine 75 acts as the Proton donor/acceptor in catalysis. 76–77 (NS) serves as a coordination point for substrate. Residue cysteine 185 is the Proton donor/acceptor of the active site. 186 to 187 (TH) contacts substrate.

This sequence belongs to the aspartate/glutamate racemases family.

It carries out the reaction L-glutamate = D-glutamate. Its pathway is cell wall biogenesis; peptidoglycan biosynthesis. In terms of biological role, provides the (R)-glutamate required for cell wall biosynthesis. The protein is Glutamate racemase of Mycobacterium bovis (strain BCG / Pasteur 1173P2).